The following is a 182-amino-acid chain: ATP-dependent protease subunit HslV (182 aa).

Residue Thr-6 is part of the active site. 3 residues coordinate Na(+): Ala-164, Cys-167, and Thr-170.

The protein belongs to the peptidase T1B family. HslV subfamily. In terms of assembly, a double ring-shaped homohexamer of HslV is capped on each side by a ring-shaped HslU homohexamer. The assembly of the HslU/HslV complex is dependent on binding of ATP.

Its subcellular location is the cytoplasm. It catalyses the reaction ATP-dependent cleavage of peptide bonds with broad specificity.. Its activity is regulated as follows. Allosterically activated by HslU binding. Protease subunit of a proteasome-like degradation complex believed to be a general protein degrading machinery. The sequence is that of ATP-dependent protease subunit HslV from Borreliella burgdorferi (strain ATCC 35210 / DSM 4680 / CIP 102532 / B31) (Borrelia burgdorferi).